Here is a 561-residue protein sequence, read N- to C-terminus: Carbohydrate sulfotransferase 15 (561 aa).

Residues 1–80 (MRHCINCCIQ…FLRFRKGKRC (80 aa)) are Cytoplasmic-facing. Residues 81–101 (SLVFGLIIMTLVMASYILSGA) form a helical; Signal-anchor for type II membrane protein membrane-spanning segment. At 102–561 (HQELLISSPF…DDEAFAWKTT (460 aa)) the chain is on the lumenal side. 263-267 (KCGTT) is a binding site for 3'-phosphoadenylyl sulfate. N364 is a glycosylation site (N-linked (GlcNAc...) asparagine). Residues R392 and S400 each contribute to the 3'-phosphoadenylyl sulfate site.

It belongs to the sulfotransferase 1 family. In terms of assembly, homodimer; disulfide-linked (Potential). The relevance of homodimerization is however unsure. May interact with phosphorylated proteins in resting B-cells, including HCK. Requires a divalent metal cation as cofactor. It depends on glutathione as a cofactor. Post-translationally, glycosylated.

Its subcellular location is the golgi apparatus membrane. It catalyses the reaction dermatan 4'-sulfate + n 3'-phosphoadenylyl sulfate = dermatan 4',6'-bissulfate + n adenosine 3',5'-bisphosphate + n H(+). The catalysed reaction is chondroitin 4'-sulfate + n 3'-phosphoadenylyl sulfate = chondroitin 4',6'-bissulfate + n adenosine 3',5'-bisphosphate + n H(+). With respect to regulation, inhibited by phenyl beta-GalNAc(4,6-SO(4)). Functionally, sulfotransferase that transfers sulfate from 3'-phosphoadenosine 5'-phosphosulfate (PAPS) to the C-6 hydroxyl group of the GalNAc 4-sulfate residue of chondroitin sulfate A and forms chondroitin sulfate E containing GlcA-GalNAc(4,6-SO(4)) repeating units. It also transfers sulfate to a unique non-reducing terminal sequence, GalNAc(4SO4)-GlcA(2SO4)-GalNAc(6SO4), to yield a highly sulfated structure similar to the structure found in thrombomodulin chondroitin sulfate. May also act as a B-cell receptor involved in BCR ligation-mediated early activation that mediate regulatory signals key to B-cell development and/or regulation of B-cell-specific RAG expression; however such results are unclear in vivo. The polypeptide is Carbohydrate sulfotransferase 15 (Chst15) (Rattus norvegicus (Rat)).